A 75-amino-acid polypeptide reads, in one-letter code: Transcription attenuation protein MtrB (75 aa).

The protein belongs to the MtrB family. Oligomer of 11 identical subunits arranged in doughnut-like structure.

Functionally, required for transcription attenuation control in the Trp operon. This trans-acting factor seems to recognize a 10 bases nucleotide sequence in the Trp leader transcript causing transcription termination. Binds the leader RNA only in presence of L-tryptophan. In Bacillus velezensis (strain DSM 23117 / BGSC 10A6 / LMG 26770 / FZB42) (Bacillus amyloliquefaciens subsp. plantarum), this protein is Transcription attenuation protein MtrB.